Consider the following 261-residue polypeptide: Uridylate kinase (261 aa).

Positions 1 to 23 are disordered; that stretch reads MTEPDVAGAPASKPEPASTGAAS. 36–39 provides a ligand contact to ATP; it reads KLGG. Position 77 (glycine 77) interacts with UMP. Positions 78 and 82 each coordinate ATP. Residues aspartate 97 and 158–165 each bind UMP; that span reads MGLPYFST. ATP-binding residues include phenylalanine 191 and aspartate 194.

Belongs to the UMP kinase family. In terms of assembly, homohexamer.

The protein localises to the cytoplasm. The catalysed reaction is UMP + ATP = UDP + ADP. Its pathway is pyrimidine metabolism; CTP biosynthesis via de novo pathway; UDP from UMP (UMPK route): step 1/1. Its activity is regulated as follows. Inhibited by UTP. Functionally, catalyzes the reversible phosphorylation of UMP to UDP. The sequence is that of Uridylate kinase from Mycobacterium tuberculosis (strain ATCC 25177 / H37Ra).